Reading from the N-terminus, the 305-residue chain is Glycine--tRNA ligase alpha subunit (305 aa).

This sequence belongs to the class-II aminoacyl-tRNA synthetase family. Tetramer of two alpha and two beta subunits.

Its subcellular location is the cytoplasm. It catalyses the reaction tRNA(Gly) + glycine + ATP = glycyl-tRNA(Gly) + AMP + diphosphate. In Streptococcus pyogenes serotype M18 (strain MGAS8232), this protein is Glycine--tRNA ligase alpha subunit.